A 146-amino-acid chain; its full sequence is Acidic phospholipase A2 S13-69J (146 aa).

The first 19 residues, 1–19 (MYPAHLLVLLAVCVSLLGA), serve as a signal peptide directing secretion. The propeptide occupies 20-27 (ASIPPQPL). 7 disulfides stabilise this stretch: Cys38/Cys98, Cys54/Cys145, Cys56/Cys72, Cys71/Cys126, Cys78/Cys119, Cys87/Cys112, and Cys105/Cys117. Tyr55, Gly57, and Gly59 together coordinate Ca(2+). His75 is an active-site residue. Asp76 lines the Ca(2+) pocket. Asp120 is a catalytic residue.

The protein belongs to the phospholipase A2 family. Group I subfamily. D49 sub-subfamily. The cofactor is Ca(2+). Expressed by the venom gland.

The protein resides in the secreted. It catalyses the reaction a 1,2-diacyl-sn-glycero-3-phosphocholine + H2O = a 1-acyl-sn-glycero-3-phosphocholine + a fatty acid + H(+). In terms of biological role, snake venom phospholipase A2 (PLA2) that inhibits collagen-induced platelet aggregation. PLA2 catalyzes the calcium-dependent hydrolysis of the 2-acyl groups in 3-sn-phosphoglycerides. In Austrelaps superbus (Lowland copperhead snake), this protein is Acidic phospholipase A2 S13-69J.